The primary structure comprises 260 residues: UPF0294 protein YPO1077/y3099/YP_2772 (260 aa).

It belongs to the UPF0294 family.

The protein resides in the cytoplasm. This chain is UPF0294 protein YPO1077/y3099/YP_2772, found in Yersinia pestis.